The following is a 341-amino-acid chain: Tryptophan--tRNA ligase (341 aa).

ATP contacts are provided by residues 11 to 13 and 19 to 20; these read RPT and GH. Positions 12–20 match the 'HIGH' region motif; sequence PTGKLHIGH. Residue D140 participates in L-tryptophan binding. ATP-binding positions include 152 to 154, L194, and 202 to 206; these read GTD and KMSKS. Positions 202–206 match the 'KMSKS' region motif; sequence KMSKS.

This sequence belongs to the class-I aminoacyl-tRNA synthetase family. As to quaternary structure, homodimer.

The protein resides in the cytoplasm. It catalyses the reaction tRNA(Trp) + L-tryptophan + ATP = L-tryptophyl-tRNA(Trp) + AMP + diphosphate + H(+). In terms of biological role, catalyzes the attachment of tryptophan to tRNA(Trp). This is Tryptophan--tRNA ligase from Streptococcus agalactiae serotype III (strain NEM316).